Here is a 418-residue protein sequence, read N- to C-terminus: Tektin-1 (418 aa).

Coiled coils occupy residues 20–107, 134–177, 266–308, and 332–383; these read NKSQ…SYKE, QELQ…DLRD, NGLK…QQEG, and IAQY…ENTI.

Belongs to the tektin family. In terms of assembly, microtubule inner protein component of sperm flagellar doublet microtubules. In terms of processing, ubiquitinated, leading to its degradation. Deubiquitinated by USP16, promoting its stability.

Its subcellular location is the cytoplasm. The protein resides in the cytoskeleton. It is found in the cilium axoneme. The protein localises to the flagellum axoneme. Microtubule inner protein (MIP) part of the dynein-decorated doublet microtubules (DMTs) in cilia and flagellar axoneme. Forms filamentous polymers in the walls of ciliary and flagellar microtubules. This is Tektin-1 (Tekt1) from Mus musculus (Mouse).